Reading from the N-terminus, the 155-residue chain is 3-hydroxyacyl-[acyl-carrier-protein] dehydratase FabZ (155 aa).

Residue histidine 58 is part of the active site.

It belongs to the thioester dehydratase family. FabZ subfamily.

It localises to the cytoplasm. It catalyses the reaction a (3R)-hydroxyacyl-[ACP] = a (2E)-enoyl-[ACP] + H2O. Involved in unsaturated fatty acids biosynthesis. Catalyzes the dehydration of short chain beta-hydroxyacyl-ACPs and long chain saturated and unsaturated beta-hydroxyacyl-ACPs. This is 3-hydroxyacyl-[acyl-carrier-protein] dehydratase FabZ from Rhizobium etli (strain CIAT 652).